Reading from the N-terminus, the 396-residue chain is Calcium-responsive transactivator (396 aa).

An N-terminal auto-inhibitory domain; necessary for interaction with SMARCA4/BRG1 region spans residues 1–148; it reads MSVAFASARP…TLPTTSMSIS (148 aa). An SH2-binding motif is present at residues 50–53; that stretch reads YQQI. Disordered stretches follow at residues 72–162, 192–280, and 311–396; these read QSLL…SQGV, QAAT…GDYA, and SQQQ…NYQQ. The span at 90-106 shows a compositional bias: low complexity; that stretch reads LTQSGSSQGLHSQGSLS. 2 stretches are compositionally biased toward polar residues: residues 107-122 and 128-147; these read DAIS…LQGQ and SHVS…SMSI. A methionine-rich intra-molecular domain region spans residues 149 to 232; the sequence is GPGYSHAGPA…GSSMMGQRPM (84 aa). Low complexity-rich tracts occupy residues 199–229, 238–261, and 311–369; these read SSAQ…MMGQ, SQQG…SHSQ, and SQQQ…YGSY. Residues 246–317 are MFD domain; that stretch reads YLGQEEYYGE…SQYSQQQAGY (72 aa). The tract at residues 334–396 is necessary for nuclear localization; sequence SQQSYPGQQQ…EQGQYGNYQQ (63 aa). Residues 353–356 carry the SH2-binding motif; sequence SQYP. The SH3-binding signature appears at 371-379; it reads APQTAPSAQ. The span at 384-396 shows a compositional bias: low complexity; sequence YGYEQGQYGNYQQ. Positions 387–396 are necessary for interaction with CREBBP and for the recruitment of CREBBP to the nuclear bodies; that stretch reads EQGQYGNYQQ. The SH2-binding signature appears at 391–394; that stretch reads YGNY.

The protein belongs to the SS18 family. As to quaternary structure, homodimer. Dimerization may be necessary for its function in neuronal dendritic development. Interacts (via C-terminus) with CREBBP (via N-terminus), EP300 and SMARCA4/BRG1. Interacts with the nBAF complex. Association with CREBBP facilitates transcription while the association with SMARCA4/BRG1 suppresses CREST-mediated transcription in resting neurons. In terms of tissue distribution, ubiquitous; with lowest levels in spleen.

It is found in the nucleus. The protein localises to the chromosome. The protein resides in the centromere. It localises to the kinetochore. Transcriptional activator which is required for calcium-dependent dendritic growth and branching in cortical neurons. Recruits CREB-binding protein (CREBBP) to nuclear bodies. Component of the CREST-BRG1 complex, a multiprotein complex that regulates promoter activation by orchestrating a calcium-dependent release of a repressor complex and a recruitment of an activator complex. In resting neurons, transcription of the c-FOS promoter is inhibited by BRG1-dependent recruitment of a phospho-RB1-HDAC1 repressor complex. Upon calcium influx, RB1 is dephosphorylated by calcineurin, which leads to release of the repressor complex. At the same time, there is increased recruitment of CREBBP to the promoter by a CREST-dependent mechanism, which leads to transcriptional activation. The CREST-BRG1 complex also binds to the NR2B promoter, and activity-dependent induction of NR2B expression involves a release of HDAC1 and recruitment of CREBBP. The sequence is that of Calcium-responsive transactivator (SS18L1) from Homo sapiens (Human).